The following is a 130-amino-acid chain: uncharacterized protein (130 aa).

The N-terminal stretch at 1–19 (MKVLGNILWWAFVGFMAYA) is a signal peptide.

This is an uncharacterized protein from Escherichia coli (strain K12).